A 100-amino-acid polypeptide reads, in one-letter code: Small ribosomal subunit protein uS14 (100 aa).

Belongs to the universal ribosomal protein uS14 family. In terms of assembly, part of the 30S ribosomal subunit. Contacts proteins S3 and S10.

Binds 16S rRNA, required for the assembly of 30S particles and may also be responsible for determining the conformation of the 16S rRNA at the A site. The sequence is that of Small ribosomal subunit protein uS14 from Nostoc sp. (strain PCC 7120 / SAG 25.82 / UTEX 2576).